A 246-amino-acid polypeptide reads, in one-letter code: 1-(5-phosphoribosyl)-5-[(5-phosphoribosylamino)methylideneamino] imidazole-4-carboxamide isomerase (246 aa).

Aspartate 7 functions as the Proton acceptor in the catalytic mechanism. Aspartate 130 functions as the Proton donor in the catalytic mechanism.

Belongs to the HisA/HisF family.

It localises to the cytoplasm. The enzyme catalyses 1-(5-phospho-beta-D-ribosyl)-5-[(5-phospho-beta-D-ribosylamino)methylideneamino]imidazole-4-carboxamide = 5-[(5-phospho-1-deoxy-D-ribulos-1-ylimino)methylamino]-1-(5-phospho-beta-D-ribosyl)imidazole-4-carboxamide. It participates in amino-acid biosynthesis; L-histidine biosynthesis; L-histidine from 5-phospho-alpha-D-ribose 1-diphosphate: step 4/9. The sequence is that of 1-(5-phosphoribosyl)-5-[(5-phosphoribosylamino)methylideneamino] imidazole-4-carboxamide isomerase from Sodalis glossinidius (strain morsitans).